A 182-amino-acid chain; its full sequence is MQTEHVILLNAQGVPTGTLEKYAAHTADTLLHLAFSSWLFNAKGQLLVTRRALSKKAWPGVWTNSVCGHPQLGESNAEAVIRRCRYELGVEITPPESIYPGFRYRATDPNGIVENEVCPVFAALTTSALQINDDEVMDYQWCDLAAVLRGIDATPWAFSPWMVMQATNREARKRLSAFTQLK.

Positions 25 and 32 each coordinate Mn(2+). Positions 30–164 (LLHLAFSSWL…PWAFSPWMVM (135 aa)) constitute a Nudix hydrolase domain. The active site involves cysteine 67. Position 69 (histidine 69) interacts with Mn(2+). Glutamate 87 is a binding site for Mg(2+). Positions 114 and 116 each coordinate Mn(2+). The active site involves glutamate 116.

This sequence belongs to the IPP isomerase type 1 family. Homodimer. It depends on Mg(2+) as a cofactor. Requires Mn(2+) as cofactor.

It is found in the cytoplasm. The catalysed reaction is isopentenyl diphosphate = dimethylallyl diphosphate. The protein operates within isoprenoid biosynthesis; dimethylallyl diphosphate biosynthesis; dimethylallyl diphosphate from isopentenyl diphosphate: step 1/1. In terms of biological role, catalyzes the 1,3-allylic rearrangement of the homoallylic substrate isopentenyl (IPP) to its highly electrophilic allylic isomer, dimethylallyl diphosphate (DMAPP). The protein is Isopentenyl-diphosphate Delta-isomerase of Escherichia coli O127:H6 (strain E2348/69 / EPEC).